The chain runs to 181 residues: Adenine phosphoribosyltransferase (181 aa).

Belongs to the purine/pyrimidine phosphoribosyltransferase family. In terms of assembly, homodimer.

It is found in the cytoplasm. The enzyme catalyses AMP + diphosphate = 5-phospho-alpha-D-ribose 1-diphosphate + adenine. Its pathway is purine metabolism; AMP biosynthesis via salvage pathway; AMP from adenine: step 1/1. Catalyzes a salvage reaction resulting in the formation of AMP, that is energically less costly than de novo synthesis. The protein is Adenine phosphoribosyltransferase of Methylorubrum extorquens (strain CM4 / NCIMB 13688) (Methylobacterium extorquens).